A 100-amino-acid chain; its full sequence is MELNPTEKDKMLIFTAGLVAERRKARGLKLNYPEAVAFISAALLEGARDGMSVAELMHYGTTLLSKSDVMDGVAEMIAEVQVEATFPDGSKLVTVHQPIV.

Belongs to the urease gamma subunit family. As to quaternary structure, heterotrimer of UreA (gamma), UreB (beta) and UreC (alpha) subunits. Three heterotrimers associate to form the active enzyme.

It is found in the cytoplasm. It carries out the reaction urea + 2 H2O + H(+) = hydrogencarbonate + 2 NH4(+). Its pathway is nitrogen metabolism; urea degradation; CO(2) and NH(3) from urea (urease route): step 1/1. The sequence is that of Urease subunit gamma from Acinetobacter baylyi (strain ATCC 33305 / BD413 / ADP1).